The following is a 508-amino-acid chain: Photosystem II CP47 reaction center protein (508 aa).

6 consecutive transmembrane segments (helical) span residues 21 to 36 (SVHI…WAGS), 101 to 115 (IMFS…IWHW), 140 to 156 (GIHL…FGAF), 203 to 218 (IAAG…FHLS), 237 to 252 (VLSS…AFVV), and 457 to 472 (SFAL…HGAR).

The protein belongs to the PsbB/PsbC family. PsbB subfamily. As to quaternary structure, PSII is composed of 1 copy each of membrane proteins PsbA, PsbB, PsbC, PsbD, PsbE, PsbF, PsbH, PsbI, PsbJ, PsbK, PsbL, PsbM, PsbT, PsbX, PsbY, PsbZ, Psb30/Ycf12, at least 3 peripheral proteins of the oxygen-evolving complex and a large number of cofactors. It forms dimeric complexes. Binds multiple chlorophylls. PSII binds additional chlorophylls, carotenoids and specific lipids. is required as a cofactor.

The protein localises to the plastid. It is found in the chloroplast thylakoid membrane. Functionally, one of the components of the core complex of photosystem II (PSII). It binds chlorophyll and helps catalyze the primary light-induced photochemical processes of PSII. PSII is a light-driven water:plastoquinone oxidoreductase, using light energy to abstract electrons from H(2)O, generating O(2) and a proton gradient subsequently used for ATP formation. In Guizotia abyssinica (Niger), this protein is Photosystem II CP47 reaction center protein.